Reading from the N-terminus, the 37-residue chain is Large ribosomal subunit protein bL36 (37 aa).

The protein belongs to the bacterial ribosomal protein bL36 family.

The chain is Large ribosomal subunit protein bL36 from Borreliella burgdorferi (strain ATCC 35210 / DSM 4680 / CIP 102532 / B31) (Borrelia burgdorferi).